Consider the following 99-residue polypeptide: Large ribosomal subunit protein bL21 (99 aa).

Belongs to the bacterial ribosomal protein bL21 family. Part of the 50S ribosomal subunit. Contacts protein L20.

In terms of biological role, this protein binds to 23S rRNA in the presence of protein L20. This chain is Large ribosomal subunit protein bL21, found in Mycoplasmopsis agalactiae (strain NCTC 10123 / CIP 59.7 / PG2) (Mycoplasma agalactiae).